The primary structure comprises 657 residues: Histidine ammonia-lyase (657 aa).

A cross-link (5-imidazolinone (Ala-Gly)) is located at residues 253–255; sequence ASG. Ser-254 is modified (2,3-didehydroalanine (Ser)). Thr-396 carries the phosphothreonine modification. Ser-635 bears the Phosphoserine mark. The residue at position 637 (Thr-637) is a Phosphothreonine. Position 648 is a phosphoserine (Ser-648).

This sequence belongs to the PAL/histidase family. In terms of processing, contains an active site 4-methylidene-imidazol-5-one (MIO), which is formed autocatalytically by cyclization and dehydration of residues Ala-Ser-Gly.

The enzyme catalyses L-histidine = trans-urocanate + NH4(+). Its pathway is amino-acid degradation; L-histidine degradation into L-glutamate; N-formimidoyl-L-glutamate from L-histidine: step 1/3. In Homo sapiens (Human), this protein is Histidine ammonia-lyase (HAL).